A 442-amino-acid polypeptide reads, in one-letter code: MRVSRYFLPILKETPREAEIVSHRLMLRSGMIRQQGAGSFSWLPLGKRVLDKVCQIVREEQDRAGAQEILMPTIQSADLWIESGRYNDYGKEMLRIRDRQDRAMLYGPTNEEMVTDIFRAYVKSYKDLPLNLYHIQWKFRDEVRPRFGVMRSREFLMKDAYSFDLDYEGAKAAYNRMFVAYLRTFARMGLKAIPMRADTGPIGGDLSHEFIILASTGESEVFCNKDFLDLPVPPADVDFTNDAEIGGVVSEWTTPYAATDEMHDEAAWAEVPAEKQLAARGIEVGHIFHFGTKYSKPMNAKVTGPDGQEHFVSMGSYGIGPTRLTAAIIEASHDDGGIIWPESVAPFDVALINMKVGDAECDRVCEELYAGMTAAGREVLYDDTDQRAGAKFATADLIGLPWQVIVGPRGIAAGEVEVKNRATGERENLPISAVPGRFGARR.

This sequence belongs to the class-II aminoacyl-tRNA synthetase family. ProS type 2 subfamily. Homodimer.

The protein localises to the cytoplasm. It catalyses the reaction tRNA(Pro) + L-proline + ATP = L-prolyl-tRNA(Pro) + AMP + diphosphate. In terms of biological role, catalyzes the attachment of proline to tRNA(Pro) in a two-step reaction: proline is first activated by ATP to form Pro-AMP and then transferred to the acceptor end of tRNA(Pro). In Chelativorans sp. (strain BNC1), this protein is Proline--tRNA ligase.